A 358-amino-acid polypeptide reads, in one-letter code: D-xylulose reductase A (358 aa).

Zn(2+) is bound by residues C47, H72, and E73. Position 182–187 (182–187 (GAGPVG)) interacts with NAD(+).

The protein belongs to the zinc-containing alcohol dehydrogenase family. Zn(2+) is required as a cofactor.

It carries out the reaction xylitol + NAD(+) = D-xylulose + NADH + H(+). The protein operates within carbohydrate degradation; L-arabinose degradation via L-arabinitol; D-xylulose 5-phosphate from L-arabinose (fungal route): step 4/5. Its function is as follows. Xylitol dehydrogenase which catalyzes the conversion of xylitol to D-xylulose. Xylose is a major component of hemicelluloses such as xylan. Most fungi utilize D-xylose via three enzymatic reactions, xylose reductase (XR), xylitol dehydrogenase (XDH), and xylulokinase, to form xylulose 5-phosphate, which enters pentose phosphate pathway. The protein is D-xylulose reductase A (xdhA) of Aspergillus oryzae (strain ATCC 42149 / RIB 40) (Yellow koji mold).